The chain runs to 893 residues: Zinc finger protein 281 (893 aa).

Disordered stretches follow at residues 1-113, 126-148, 153-172, and 198-251; these read MKIG…FPSQ, IKQE…HHHY, AGAE…SHGV, and SGSR…GAVL. Residue lysine 2 forms a Glycyl lysine isopeptide (Lys-Gly) (interchain with G-Cter in SUMO2) linkage. Residues 7-36 show a composition bias toward gly residues; that stretch reads FLSGGGGPSSSGGSGSGGSSGSASGGSGGG. Glycyl lysine isopeptide (Lys-Gly) (interchain with G-Cter in SUMO2) cross-links involve residues lysine 100 and lysine 127. Positions 127–139 are enriched in basic and acidic residues; the sequence is KQEKPADPEEQPS. Over residues 161–170 the composition is skewed to gly residues; the sequence is GLGGGEGGSH. Basic and acidic residues predominate over residues 201 to 216; the sequence is RTDEHGNQEPKQDANV. Glycyl lysine isopeptide (Lys-Gly) (interchain with G-Cter in SUMO2) cross-links involve residues lysine 211, lysine 217, lysine 223, lysine 230, lysine 240, and lysine 256. 3 consecutive C2H2-type zinc fingers follow at residues 258–280, 286–308, and 314–336; these read HICD…VLIH, FQCS…EKIH, and FGCD…KRTH. Residues lysine 298 and lysine 322 each participate in a glycyl lysine isopeptide (Lys-Gly) (interchain with G-Cter in SUMO2) cross-link. The segment at 342-364 adopts a C2H2-type 4; atypical zinc-finger fold; that stretch reads YKCDTCQQYFSRTDRLLKHRRTC. Lysine 370 participates in a covalent cross-link: Glycyl lysine isopeptide (Lys-Gly) (interchain with G-Cter in SUMO2). The interval 371 to 425 is disordered; sequence GAASAEPGSSNHNSMGNLAVLSQGNTSSSRRKSKSKSIAIENKEHKTGKTNESQM. Polar residues predominate over residues 377 to 396; the sequence is PGSSNHNSMGNLAVLSQGNT. Residue serine 392 is modified to Phosphoserine. Residues lysine 406, lysine 413, lysine 457, and lysine 474 each participate in a glycyl lysine isopeptide (Lys-Gly) (interchain with G-Cter in SUMO2) cross-link. Phosphoserine is present on serine 481. Glycyl lysine isopeptide (Lys-Gly) (interchain with G-Cter in SUMO2) cross-links involve residues lysine 490, lysine 495, lysine 536, lysine 596, lysine 614, and lysine 619. Residues 613-658 form a disordered region; that stretch reads GKSETQKEDPFNLTEPRVDLHTSGEHSELVQEENLSPGTQTPSNDK. Basic and acidic residues predominate over residues 616–641; sequence ETQKEDPFNLTEPRVDLHTSGEHSEL. Residues 645–658 show a composition bias toward polar residues; sequence ENLSPGTQTPSNDK. The residue at position 648 (serine 648) is a Phosphoserine. Glycyl lysine isopeptide (Lys-Gly) (interchain with G-Cter in SUMO2) cross-links involve residues lysine 658 and lysine 667. The span at 775–813 shows a compositional bias: polar residues; sequence SSAFQSSSQKLTSQKEQQKNLESSTSFQIPSQELASQID. A disordered region spans residues 775–815; sequence SSAFQSSSQKLTSQKEQQKNLESSTSFQIPSQELASQIDPQ. Position 782 is a phosphoserine (serine 782). Glycyl lysine isopeptide (Lys-Gly) (interchain with G-Cter in SUMO2) cross-links involve residues lysine 784, lysine 789, and lysine 793. Serine 805 carries the post-translational modification Phosphoserine. Glycyl lysine isopeptide (Lys-Gly) (interchain with G-Cter in SUMO2) cross-links involve residues lysine 816 and lysine 838. Phosphothreonine is present on threonine 886.

This sequence belongs to the krueppel C2H2-type zinc-finger protein family. As to quaternary structure, interacts with NANOG. Associates with the NuRD complex.

Its subcellular location is the nucleus. Transcription repressor that plays a role in regulation of embryonic stem cells (ESCs) differentiation. Required for ESCs differentiation and acts by mediating autorepression of NANOG in ESCs: binds to the NANOG promoter and promotes association of NANOG protein to its own promoter and recruits the NuRD complex, which deacetylates histones. Not required for establishement and maintenance of ESCs. Represses the transcription of a number of genes including GAST, ODC1 and VIM. Binds to the G-rich box in the enhancer region of these genes. This Mus musculus (Mouse) protein is Zinc finger protein 281 (Znf281).